The primary structure comprises 185 residues: Translation initiation factor IF-3 (185 aa).

This sequence belongs to the IF-3 family. As to quaternary structure, monomer.

Its subcellular location is the cytoplasm. Its function is as follows. IF-3 binds to the 30S ribosomal subunit and shifts the equilibrium between 70S ribosomes and their 50S and 30S subunits in favor of the free subunits, thus enhancing the availability of 30S subunits on which protein synthesis initiation begins. The protein is Translation initiation factor IF-3 of Streptococcus pneumoniae serotype 19F (strain G54).